Reading from the N-terminus, the 768-residue chain is cGMP-dependent protein kinase, isozyme 1 (768 aa).

The interval 1-192 is regulatory; it reads MAAGMLTDRE…NDFLKNIDAS (192 aa). Low complexity predominate over residues 114 to 127; the sequence is PLASTSSASPSGRT. The interval 114-134 is disordered; it reads PLASTSSASPSGRTSADEVRP. Residues 249 to 252, 259 to 260, Arg366, 375 to 378, 385 to 386, and Tyr421 contribute to the 3',5'-cyclic GMP site; these read GELA, RT, and GEQA. The 261-residue stretch at 457–717 folds into the Protein kinase domain; the sequence is LEVVSTLGIG…IQDIKKHKWF (261 aa). Residues 463–471 and Lys488 contribute to the ATP site; that span reads LGIGGFGRV. Catalysis depends on Asp582, which acts as the Proton acceptor. In terms of domain architecture, AGC-kinase C-terminal spans 718-768; that stretch reads LGFDWDGLASQLLIPPFVRPIAHPTDVRYFDRFPCDLNEPPDELSGWDADF.

Belongs to the protein kinase superfamily. AGC Ser/Thr protein kinase family. cGMP subfamily. In terms of assembly, homodimer. It depends on Mg(2+) as a cofactor. Autophosphorylated. In embryo stage 13, expression is seen in a few large, irregular cells having the appearance of hemocytes or macrophages. In adults, expression is seen in optic lamina and weakly in testis.

The catalysed reaction is L-seryl-[protein] + ATP = O-phospho-L-seryl-[protein] + ADP + H(+). It carries out the reaction L-threonyl-[protein] + ATP = O-phospho-L-threonyl-[protein] + ADP + H(+). Its activity is regulated as follows. Binding of cGMP results in enzyme activation. The polypeptide is cGMP-dependent protein kinase, isozyme 1 (Pkg21D) (Drosophila melanogaster (Fruit fly)).